The chain runs to 152 residues: Putative membrane protein insertion efficiency factor (152 aa).

Residues 81–152 (AAGGYDPVPG…IVGSGRGPWV (72 aa)) are disordered.

This sequence belongs to the UPF0161 family.

The protein localises to the cell membrane. Could be involved in insertion of integral membrane proteins into the membrane. This is Putative membrane protein insertion efficiency factor from Frankia casuarinae (strain DSM 45818 / CECT 9043 / HFP020203 / CcI3).